The primary structure comprises 187 residues: MSSGYSANQYENAFNSQKLQNWTVPKHFKERPSAAQGHTIFIASDRGHLLPGVKAKRGSAWPDFKGTWELPAHLPPASINPTARSEEGRQRLTHTYTHSGHGIHTHRAAKTTAAPAADGQTEGDQTCNAPTSERPVTGERPVTGQSGRGERPLTQASEREQSLTLTYSKRREQSLEETPQLEREEPQ.

A disordered region spans residues 97-187 (THSGHGIHTH…TPQLEREEPQ (91 aa)). The span at 122–131 (EGDQTCNAPT) shows a compositional bias: polar residues. Residues 169–187 (KRREQSLEETPQLEREEPQ) are compositionally biased toward basic and acidic residues.

This sequence belongs to the Flattop family.

It is found in the cytoplasm. It localises to the cytoskeleton. The protein resides in the cilium basal body. Its subcellular location is the cell projection. The protein localises to the cilium. It is found in the apical cell membrane. It localises to the cilium axoneme. Functionally, microtubule inner protein (MIP) part of the dynein-decorated doublet microtubules (DMTs) in cilia axoneme. Acts as a regulator of cilium basal body docking and positioning in mono- and multiciliated cells. Regulates basal body docking and cilia formation in multiciliated lung cells. Regulates kinocilium positioning and stereocilia bundle morphogenesis in the inner ear. This chain is Protein Flattop, found in Salmo salar (Atlantic salmon).